The chain runs to 195 residues: Interferon tau-1 (195 aa).

The signal sequence occupies residues 1-23 (MAFVLSLLMALVLVSYGPGGSLG). 2 disulfides stabilise this stretch: Cys-24–Cys-122 and Cys-52–Cys-162.

The protein belongs to the alpha/beta interferon family. IFN-alphaII subfamily. Constitutively and exclusively expressed in the mononuclear cells of the extraembryonic trophectoderm.

It localises to the secreted. Its function is as follows. Paracrine hormone primarily responsible for maternal recognition of pregnancy. Interacts with endometrial receptors, probably type I interferon receptors, and blocks estrogen receptor expression, preventing the estrogen-induced increase in oxytocin receptor expression in the endometrium. This results in the suppression of the pulsatile endometrial release of the luteolytic hormone prostaglandin F2-alpha, hindering the regression of the corpus luteum (luteolysis) and therefore a return to ovarian cyclicity. This, and a possible direct effect of IFN-tau on prostaglandin synthesis, leads in turn to continued ovarian progesterone secretion, which stimulates the secretion by the endometrium of the nutrients required for the growth of the conceptus. In summary, displays particularly high antiviral and antiproliferative potency concurrently with particular weak cytotoxicity, high antiluteolytic activity and immunomodulatory properties. In contrast with other IFNs, IFN-tau is not virally inducible. This chain is Interferon tau-1 (IFNT1), found in Ovis aries (Sheep).